A 251-amino-acid chain; its full sequence is Arginine and glutamate-rich protein 1-A (251 aa).

Residues 1–48 (MGRSRSRSSSRSKHSKHSRKRSRSKSKSKKRSRSKEPKRNRRSRSRSG) show a composition bias toward basic residues. The segment at 1–53 (MGRSRSRSSSRSKHSKHSRKRSRSKSKSKKRSRSKEPKRNRRSRSRSGSRRDR) is necessary and sufficient for RNA binding. Disordered stretches follow at residues 1-92 (MGRS…ERQR) and 215-251 (RMKL…KATE). Composition is skewed to basic and acidic residues over residues 49-63 (SRRD…RTDM), 71-92 (RNND…ERQR), and 215-231 (RMKL…EEQK). Positions 54-251 (GGSPPDRTDM…RLSFSLKATE (198 aa)) are necessary and sufficient for transcriptional regulation.

The protein belongs to the ARGLU1 family.

It is found in the nucleus. It localises to the nucleus speckle. Its subcellular location is the chromosome. In terms of biological role, dual function regulator of gene expression; regulator of transcription and modulator of alternative splicing. General coactivator of nuclear receptor-induced gene expression. This Danio rerio (Zebrafish) protein is Arginine and glutamate-rich protein 1-A (arglu1a).